The following is a 409-amino-acid chain: Argininosuccinate synthase (409 aa).

ATP-binding positions include 16-24 (AYSGGLDTS) and Ala-44. Tyr-96 and Ser-101 together coordinate L-citrulline. Gly-126 lines the ATP pocket. L-aspartate is bound by residues Thr-128, Asn-132, and Asp-133. Asn-132 contacts L-citrulline. L-citrulline-binding residues include Arg-136, Ser-185, Ser-194, Glu-270, and Tyr-282.

Belongs to the argininosuccinate synthase family. Type 1 subfamily. Homotetramer.

It is found in the cytoplasm. The enzyme catalyses L-citrulline + L-aspartate + ATP = 2-(N(omega)-L-arginino)succinate + AMP + diphosphate + H(+). Its pathway is amino-acid biosynthesis; L-arginine biosynthesis; L-arginine from L-ornithine and carbamoyl phosphate: step 2/3. This chain is Argininosuccinate synthase, found in Shewanella piezotolerans (strain WP3 / JCM 13877).